A 320-amino-acid polypeptide reads, in one-letter code: Aspartate carbamoyltransferase catalytic subunit (320 aa).

Carbamoyl phosphate is bound by residues arginine 68 and threonine 69. Lysine 96 is a binding site for L-aspartate. The carbamoyl phosphate site is built by arginine 118, histidine 148, and glutamine 151. Arginine 181 and arginine 236 together coordinate L-aspartate. Carbamoyl phosphate is bound by residues glycine 277 and proline 278.

The protein belongs to the aspartate/ornithine carbamoyltransferase superfamily. ATCase family. In terms of assembly, heterododecamer (2C3:3R2) of six catalytic PyrB chains organized as two trimers (C3), and six regulatory PyrI chains organized as three dimers (R2).

It catalyses the reaction carbamoyl phosphate + L-aspartate = N-carbamoyl-L-aspartate + phosphate + H(+). It functions in the pathway pyrimidine metabolism; UMP biosynthesis via de novo pathway; (S)-dihydroorotate from bicarbonate: step 2/3. In terms of biological role, catalyzes the condensation of carbamoyl phosphate and aspartate to form carbamoyl aspartate and inorganic phosphate, the committed step in the de novo pyrimidine nucleotide biosynthesis pathway. The polypeptide is Aspartate carbamoyltransferase catalytic subunit (Variovorax paradoxus (strain S110)).